The chain runs to 270 residues: 3-phenylpropionate-dihydrodiol/cinnamic acid-dihydrodiol dehydrogenase (270 aa).

Residue 10–34 (FITGGGSGLGLALVERFIEEGAQVA) coordinates NAD(+). Ser143 contacts substrate. Tyr156 functions as the Proton acceptor in the catalytic mechanism.

It belongs to the short-chain dehydrogenases/reductases (SDR) family.

The catalysed reaction is 3-(cis-5,6-dihydroxycyclohexa-1,3-dien-1-yl)propanoate + NAD(+) = 3-(2,3-dihydroxyphenyl)propanoate + NADH + H(+). It carries out the reaction (2E)-3-(cis-5,6-dihydroxycyclohexa-1,3-dien-1-yl)prop-2-enoate + NAD(+) = (2E)-3-(2,3-dihydroxyphenyl)prop-2-enoate + NADH + H(+). The protein operates within aromatic compound metabolism; 3-phenylpropanoate degradation. In terms of biological role, converts 3-phenylpropionate-dihydrodiol (PP-dihydrodiol) and cinnamic acid-dihydrodiol (CI-dihydrodiol) into 3-(2,3-dihydroxylphenyl)propanoic acid (DHPP) and 2,3-dihydroxicinnamic acid (DHCI), respectively. The chain is 3-phenylpropionate-dihydrodiol/cinnamic acid-dihydrodiol dehydrogenase from Escherichia coli O17:K52:H18 (strain UMN026 / ExPEC).